The chain runs to 392 residues: L-rhamnonate dehydratase (392 aa).

Substrate-binding residues include H22 and R48. Positions 214, 240, and 268 each coordinate Mg(2+). H318 functions as the Proton acceptor in the catalytic mechanism. Position 338 (E338) interacts with substrate.

Belongs to the mandelate racemase/muconate lactonizing enzyme family. RhamD subfamily. In terms of assembly, homooctamer; tetramer of dimers. Mg(2+) serves as cofactor.

It carries out the reaction L-rhamnonate = 2-dehydro-3-deoxy-L-rhamnonate + H2O. Functionally, catalyzes the dehydration of L-rhamnonate to 2-keto-3-deoxy-L-rhamnonate (KDR). This is L-rhamnonate dehydratase from Paraburkholderia phytofirmans (strain DSM 17436 / LMG 22146 / PsJN) (Burkholderia phytofirmans).